We begin with the raw amino-acid sequence, 303 residues long: Vacuolar protein sorting-associated protein 26B (303 aa).

This sequence belongs to the VPS26 family. Component of the retromer complex which consists of VPS29 (MAG1), VPS26 (VPS26A or VPS26B), VPS35 (VPS35A or VPS35B or VPS35C), VPS5/17 (SNX1 or SNX2A or SNX2B). Component of a retromer subcomplex consisting of VPS29 (MAG1), VPS26 (VPS26A or VPS26B), VPS35 (VPS35A or VPS35B or VPS35C).

Its subcellular location is the cytoplasm. It localises to the endosome membrane. It is found in the prevacuolar compartment membrane. The protein localises to the golgi apparatus. The protein resides in the trans-Golgi network membrane. Plays a role in vesicular protein sorting. Component of the membrane-associated retromer complex which is essential in endosome-to-Golgi retrograde transport. The VPS29-VPS26-VPS35 subcomplex may be involved in recycling of specific cargos from endosome to the plasma membrane. The chain is Vacuolar protein sorting-associated protein 26B (VPS26B) from Arabidopsis thaliana (Mouse-ear cress).